We begin with the raw amino-acid sequence, 506 residues long: Beta-glucosidase 13 (506 aa).

An N-terminal signal peptide occupies residues 1–25 (MAAAGEVVMLGGILLPLLLVVAVSG). Q49 contacts a beta-D-glucoside. The N-linked (GlcNAc...) asparagine glycan is linked to N118. A beta-D-glucoside contacts are provided by residues H153 and 198-199 (NE). E199 (proton donor) is an active-site residue. A disulfide bridge links C219 with C226. N225 carries an N-linked (GlcNAc...) asparagine glycan. Y342 is a binding site for a beta-D-glucoside. 2 N-linked (GlcNAc...) asparagine glycosylation sites follow: N357 and N367. An a beta-D-glucoside-binding site is contributed by E413. The Nucleophile role is filled by E413. N421 is a glycosylation site (N-linked (GlcNAc...) asparagine). Residues W462, 469 to 470 (EW), and F478 each bind a beta-D-glucoside.

The protein belongs to the glycosyl hydrolase 1 family.

It catalyses the reaction Hydrolysis of terminal, non-reducing beta-D-glucosyl residues with release of beta-D-glucose.. This Oryza sativa subsp. japonica (Rice) protein is Beta-glucosidase 13 (BGLU13).